Consider the following 97-residue polypeptide: ESAT-6-like protein EsxG (97 aa).

At serine 2 the chain carries N-acetylserine.

It belongs to the WXG100 family. CFP-10 subfamily. Forms a tight 1:1 complex with EsxH.

The protein resides in the secreted. In terms of biological role, esxG, in complex with EsxH, disrupts ESCRT function and impairs host phagosome maturation, thereby promoting intracellular bacterial growth. The complex acts by interacting, via EsxH, with the host hepatocyte growth factor-regulated tyrosine kinase substrate (HGS/HRS), a component of the ESCRT machinery. EsxG stabilizes EsxH in the host cytosol. This Mycobacterium tuberculosis (strain ATCC 25618 / H37Rv) protein is ESAT-6-like protein EsxG.